We begin with the raw amino-acid sequence, 180 residues long: V-type proton ATPase subunit c''1 (180 aa).

Residues 1 to 26 are Lumenal-facing; the sequence is MSGVVALGHASSWGAALVRISPYTFS. Residues 27 to 47 traverse the membrane as a helical segment; that stretch reads AIGIAISIGVSVLGAAWGIYI. At 48–66 the chain is on the cytoplasmic side; that stretch reads TGSSLIGAAIEAPRITSKN. Residues 67–87 form a helical membrane-spanning segment; sequence LISVIFCEAVAIYGVIVAIIL. Residues 88–110 are Lumenal-facing; that stretch reads QTKLESVPSSKMYDAESLRAGYA. Residues 111-131 form a helical membrane-spanning segment; that stretch reads IFASGIIVGFANLVCGLCVGI. Residues 132–149 are Cytoplasmic-facing; it reads IGSSCALSDAQNSTLFVK. Residues 150 to 170 traverse the membrane as a helical segment; sequence ILVIEIFGSALGLFGVIVGII. The Lumenal portion of the chain corresponds to 171–180; it reads MSAQATWPTK.

It belongs to the V-ATPase proteolipid subunit family. As to quaternary structure, V-ATPase is a heteromultimeric enzyme composed of a peripheral catalytic V1 complex (components A to H) attached to an integral membrane V0 proton pore complex (components: a, c, c'', d and e). The proteolipid components c and c'' are present as a hexameric ring that forms the proton-conducting pore. In terms of tissue distribution, preferentially expressed in roots.

It is found in the endoplasmic reticulum membrane. Its subcellular location is the golgi apparatus membrane. In terms of biological role, proton-conducting pore forming subunit of the membrane integral V0 complex of vacuolar ATPase. V-ATPase is responsible for acidifying a variety of intracellular compartments in eukaryotic cells. This chain is V-type proton ATPase subunit c''1 (VHA-c''1), found in Arabidopsis thaliana (Mouse-ear cress).